The sequence spans 858 residues: MFTLAEVASLNDIQPTYRILKPWWDVFMDYLAVVMLMVAIFAGTMQLTKDQVVCLPVLPSPANSKAHTPPGNADVTTEVPKMETATPQDQNGQTTNDIAFGTSAVTPDIPLQATYSHAESTFPSQETKKEKRDPTGRKTNLDFQQYVFINQMCYHLALPWYSKYFPYLALIHTIILMVSSNFWFKYPKTCSKVEHFVSILGKCFESPWTTKALSETACEDSEENKQRITGAQTLPKHVSTSSDEGSPSASTPMINKTGFKFSAEKPVIEVPSMTILDKKDGEQAKALFEKVRKFRAHVEDSDLIYKLYVVQTLIKTAKFIFILCYTANFVNAISFEHVCKPKVEHLTGYEVFECTHNMAYMLKKLLISYISIICVYGFICLYTLFWLFRIPLKEYSFEKVREESSFSDIPDVKNDFAFLLHMVDQYDQLYSKRFGVFLSEVSENKLREISLNHEWTFEKLRQHVSRNAQDKQELHLFMLSGVPDAVFDLTDLDVLKLELIPEAKIPAKISQMTNLQELHLCHCPAKVEQTAFSFLRDHLRCLHVKFTDVAEIPAWVYLLKNLRELYLIGNLNSENNKMIGLESLRELRHLKILHVKSNLTKVPSNITDVAPHLTKLVIHNDGTKLLVLNSLKKMMNVAELELQNCELERIPHAIFSLSNLQELDLKSNSIRTIEEIISFQHLKRLTCLKLWHNKIVAIPPSITHVKNLESLYFSNNKLESLPVAVFSLQKLRCLDVSYNNISTIPIEIGLLQNLQHLHITGNKVDVLPKQLFKCVKLRTLNLGQNCIASLPEKISQLSQLTQLELKGNCLDRLPAQLGQCRMLKKSGLVVEDQLFDTLPLEVKEALNQDVNVPFANGI.

Topologically, residues Met-1–Pro-22 are cytoplasmic. The helical transmembrane segment at Trp-23–Thr-48 threads the bilayer. The Extracellular segment spans residues Lys-49–Lys-163. The cysteines at positions 54 and 354 are disulfide-linked. The segment at Ala-118–Arg-137 is disordered. Basic and acidic residues predominate over residues Glu-126–Arg-137. A helical transmembrane segment spans residues Tyr-164 to Phe-182. The Cytoplasmic segment spans residues Trp-183–Tyr-308. A disordered region spans residues Ser-221–Thr-251. Residues Arg-227–Thr-251 show a composition bias toward polar residues. Ser-241, Ser-242, and Ser-246 each carry phosphoserine. Residues Val-309–Val-330 form a helical membrane-spanning segment. Over Asn-331–Tyr-360 the chain is Extracellular. Residues Met-361–Trp-386 form a helical membrane-spanning segment. Topologically, residues Leu-387–Ile-858 are cytoplasmic. 13 LRR repeats span residues Asn-514–Phe-534, His-538–Leu-559, Asn-561–Glu-582, His-589–Val-609, His-612–Lys-632, Asn-636–Leu-657, Asn-659–Gln-680, Arg-684–Val-705, Asn-707–Leu-728, Lys-730–Leu-751, Asn-753–Cys-774, Lys-776–Leu-797, and Gln-799–Cys-820.

The protein belongs to the LRRC8 family. Heterohexamer; oligomerizes with other LRRC8 proteins (LRRC8A, LRRC8B, LRRC8C and/or LRRC8E) to form a heterohexamer. In vivo, the subunit composition may depend primarily on expression levels, and heterooligomeric channels containing various proportions of the different LRRC8 proteins may coexist.

Its subcellular location is the cell membrane. The protein resides in the endoplasmic reticulum membrane. The enzyme catalyses chloride(in) = chloride(out). It carries out the reaction iodide(out) = iodide(in). It catalyses the reaction taurine(out) = taurine(in). Its function is as follows. Non-essential component of the volume-regulated anion channel (VRAC, also named VSOAC channel), an anion channel required to maintain a constant cell volume in response to extracellular or intracellular osmotic changes. The VRAC channel conducts iodide better than chloride and can also conduct organic osmolytes like taurine. Plays a redundant role in the efflux of amino acids, such as aspartate, in response to osmotic stress. Channel activity requires LRRC8A plus at least one other family member (LRRC8B, LRRC8C, LRRC8D or LRRC8E); channel characteristics depend on the precise subunit composition. Also acts as a regulator of glucose-sensing in pancreatic beta cells: VRAC currents, generated in response to hypotonicity- or glucose-induced beta cell swelling, depolarize cells, thereby causing electrical excitation, leading to increase glucose sensitivity and insulin secretion. VRAC channels containing LRRC8D inhibit transport of immunoreactive cyclic dinucleotide GMP-AMP (2'-3'-cGAMP), an immune messenger produced in response to DNA virus in the cytosol. The sequence is that of Volume-regulated anion channel subunit LRRC8D from Rattus norvegicus (Rat).